The following is an 801-amino-acid chain: Cadherin-20 (801 aa).

A signal peptide spans Met1 to Ser34. A propeptide spanning residues Ser35–Arg59 is cleaved from the precursor. Residues Ser60 to Arg619 are Extracellular-facing. 5 Cadherin domains span residues Trp61–Phe165, Leu166–Phe274, Pro275–Phe389, Glu390–Phe494, and Phe494–Ala610. N-linked (GlcNAc...) asparagine glycosylation occurs at Asn261. Residues Asn420, Asn461, and Asn542 are each glycosylated (N-linked (GlcNAc...) asparagine). A helical membrane pass occupies residues Gly620 to Leu640. Over Ser641–Trp801 the chain is Cytoplasmic.

The protein localises to the cell membrane. Cadherins are calcium-dependent cell adhesion proteins. They preferentially interact with themselves in a homophilic manner in connecting cells; cadherins may thus contribute to the sorting of heterogeneous cell types. In Rattus norvegicus (Rat), this protein is Cadherin-20 (Cdh20).